The sequence spans 140 residues: uncharacterized protein (140 aa).

The region spanning 2-140 (KAVIAKNEEQ…GIPHLQMMKD (139 aa)) is the N-acetyltransferase domain.

The protein belongs to the acetyltransferase family.

This is an uncharacterized protein from Bacillus subtilis (strain 168).